Reading from the N-terminus, the 362-residue chain is Thiol protease aleurain (362 aa).

The first 22 residues, 1 to 22, serve as a signal peptide directing secretion; it reads MAHARVLLLALAVLATAAVAVA. Residues 23-143 constitute a propeptide, activation peptide; it reads SSSSFADSNP…GNHLMRDAAA (121 aa). 2 disulfides stabilise this stretch: C165/C208 and C199/C241. Residue C168 is part of the active site. A glycan (N-linked (GlcNAc...) asparagine) is linked at N188. N257 is a glycosylation site (N-linked (GlcNAc...) asparagine). The cysteines at positions 299 and 349 are disulfide-linked. Catalysis depends on residues H308 and N328.

The protein belongs to the peptidase C1 family.

The protein resides in the vacuole. The enzyme catalyses Hydrolysis of proteins, acting as an aminopeptidase (notably, cleaving Arg-|-Xaa bonds) as well as an endopeptidase.. In terms of biological role, may play a role in proteolysis leading to mobilization of nitrogen during senescence and starvation. This is Thiol protease aleurain from Hordeum vulgare (Barley).